We begin with the raw amino-acid sequence, 169 residues long: Ureidoglycolate lyase (169 aa).

The protein belongs to the ureidoglycolate lyase family. Homodimer. Ni(2+) is required as a cofactor.

It catalyses the reaction (S)-ureidoglycolate = urea + glyoxylate. Its pathway is nitrogen metabolism; (S)-allantoin degradation. Catalyzes the catabolism of the allantoin degradation intermediate (S)-ureidoglycolate, generating urea and glyoxylate. Involved in the utilization of allantoin as nitrogen source. This Brucella anthropi (strain ATCC 49188 / DSM 6882 / CCUG 24695 / JCM 21032 / LMG 3331 / NBRC 15819 / NCTC 12168 / Alc 37) (Ochrobactrum anthropi) protein is Ureidoglycolate lyase.